Here is a 390-residue protein sequence, read N- to C-terminus: Succinate--CoA ligase [ADP-forming] subunit beta (390 aa).

Residues 9–244 (KEIFRKYGVP…LDEEEPTEVE (236 aa)) form the ATP-grasp domain. Residues lysine 46, 53-55 (GRG), glutamate 99, alanine 102, and glutamate 107 contribute to the ATP site. Mg(2+)-binding residues include asparagine 199 and aspartate 213. Residues asparagine 264 and 321 to 323 (GIV) contribute to the substrate site.

Belongs to the succinate/malate CoA ligase beta subunit family. As to quaternary structure, heterotetramer of two alpha and two beta subunits. Mg(2+) is required as a cofactor.

The catalysed reaction is succinate + ATP + CoA = succinyl-CoA + ADP + phosphate. It catalyses the reaction GTP + succinate + CoA = succinyl-CoA + GDP + phosphate. It participates in carbohydrate metabolism; tricarboxylic acid cycle; succinate from succinyl-CoA (ligase route): step 1/1. Functionally, succinyl-CoA synthetase functions in the citric acid cycle (TCA), coupling the hydrolysis of succinyl-CoA to the synthesis of either ATP or GTP and thus represents the only step of substrate-level phosphorylation in the TCA. The beta subunit provides nucleotide specificity of the enzyme and binds the substrate succinate, while the binding sites for coenzyme A and phosphate are found in the alpha subunit. This is Succinate--CoA ligase [ADP-forming] subunit beta from Nautilia profundicola (strain ATCC BAA-1463 / DSM 18972 / AmH).